The following is a 141-amino-acid chain: Transcription antitermination protein NusB (141 aa).

The protein belongs to the NusB family.

Functionally, involved in transcription antitermination. Required for transcription of ribosomal RNA (rRNA) genes. Binds specifically to the boxA antiterminator sequence of the ribosomal RNA (rrn) operons. This is Transcription antitermination protein NusB from Neisseria meningitidis serogroup A / serotype 4A (strain DSM 15465 / Z2491).